We begin with the raw amino-acid sequence, 240 residues long: Probable transcriptional regulator ycf27 (240 aa).

A Response regulatory domain is found at 5-118; sequence KILVIDDEAS…ELEARIRSVL (114 aa). 4-aspartylphosphate is present on aspartate 54. Residues 74 to 92 constitute a DNA-binding region (H-T-H motif); the sequence is DVPIIMLTALSDVSDRITG. Positions 133 to 234 form a DNA-binding region, ompR/PhoB-type; it reads SGIINIGFLK…ARGTGYLFQR (102 aa).

The protein localises to the plastid. Its subcellular location is the chloroplast. In terms of biological role, probable promoter-specific protein mediating the interaction between DNA and RNA polymerase. In Porphyridium aerugineum (Red microalga), this protein is Probable transcriptional regulator ycf27 (ycf27).